Reading from the N-terminus, the 504-residue chain is Cytochrome P450 6a9 (504 aa).

C449 is a heme binding site.

This sequence belongs to the cytochrome P450 family. Requires heme as cofactor.

Its subcellular location is the endoplasmic reticulum membrane. It is found in the microsome membrane. Its function is as follows. Involved in the metabolism of insect hormones and in the breakdown of synthetic insecticides. The protein is Cytochrome P450 6a9 (Cyp6a9) of Drosophila melanogaster (Fruit fly).